The following is a 745-amino-acid chain: AMP deaminase 1 (745 aa).

Position 79 is a phosphothreonine (threonine 79). Phosphoserine is present on serine 83. Tyrosine 214 is subject to Phosphotyrosine. Positions 301 and 303 each coordinate Zn(2+). Substrate-binding positions include histidine 303 and 372–377; that span reads KFNDKY. Residue serine 439 is modified to Phosphoserine. Histidine 570 contacts Zn(2+). A substrate-binding site is contributed by glutamate 573. Histidine 592 serves as the catalytic Proton acceptor. Position 647 (aspartate 647) interacts with Zn(2+). Substrate is bound at residue 648 to 651; the sequence is DPMQ.

This sequence belongs to the metallo-dependent hydrolases superfamily. Adenosine and AMP deaminases family. In terms of assembly, homotetramer. The cofactor is Zn(2+).

It catalyses the reaction AMP + H2O + H(+) = IMP + NH4(+). Its pathway is purine metabolism; IMP biosynthesis via salvage pathway; IMP from AMP: step 1/1. In terms of biological role, AMP deaminase plays a critical role in energy metabolism. The protein is AMP deaminase 1 of Mus musculus (Mouse).